A 277-amino-acid chain; its full sequence is Large ribosomal subunit protein uL2 (277 aa).

The interval 222 to 277 is disordered; that stretch reads GVAMNPVDHPHGGGEGRTSGGRHPVTPWGKPTKGKKTRSNKATDKFIMRSRHQRKK.

This sequence belongs to the universal ribosomal protein uL2 family. Part of the 50S ribosomal subunit. Forms a bridge to the 30S subunit in the 70S ribosome.

Functionally, one of the primary rRNA binding proteins. Required for association of the 30S and 50S subunits to form the 70S ribosome, for tRNA binding and peptide bond formation. It has been suggested to have peptidyltransferase activity; this is somewhat controversial. Makes several contacts with the 16S rRNA in the 70S ribosome. The polypeptide is Large ribosomal subunit protein uL2 (Brucella melitensis biotype 1 (strain ATCC 23456 / CCUG 17765 / NCTC 10094 / 16M)).